The primary structure comprises 225 residues: Probable methylthioribulose-1-phosphate dehydratase (225 aa).

Position 86 (Cys86) interacts with substrate. Residues His104 and His106 each coordinate Zn(2+). Glu127 (proton donor/acceptor) is an active-site residue. His183 is a binding site for Zn(2+).

It belongs to the aldolase class II family. MtnB subfamily. It depends on Zn(2+) as a cofactor.

It is found in the cytoplasm. The enzyme catalyses 5-(methylsulfanyl)-D-ribulose 1-phosphate = 5-methylsulfanyl-2,3-dioxopentyl phosphate + H2O. The protein operates within amino-acid biosynthesis; L-methionine biosynthesis via salvage pathway; L-methionine from S-methyl-5-thio-alpha-D-ribose 1-phosphate: step 2/6. Catalyzes the dehydration of methylthioribulose-1-phosphate (MTRu-1-P) into 2,3-diketo-5-methylthiopentyl-1-phosphate (DK-MTP-1-P). The chain is Probable methylthioribulose-1-phosphate dehydratase from Leishmania braziliensis.